Here is a 179-residue protein sequence, read N- to C-terminus: Large ribosomal subunit protein uL5 (179 aa).

Belongs to the universal ribosomal protein uL5 family. In terms of assembly, part of the 50S ribosomal subunit; part of the 5S rRNA/L5/L18/L25 subcomplex. Contacts the 5S rRNA and the P site tRNA. Forms a bridge to the 30S subunit in the 70S ribosome.

This is one of the proteins that bind and probably mediate the attachment of the 5S RNA into the large ribosomal subunit, where it forms part of the central protuberance. In the 70S ribosome it contacts protein S13 of the 30S subunit (bridge B1b), connecting the 2 subunits; this bridge is implicated in subunit movement. Contacts the P site tRNA; the 5S rRNA and some of its associated proteins might help stabilize positioning of ribosome-bound tRNAs. The protein is Large ribosomal subunit protein uL5 of Bdellovibrio bacteriovorus (strain ATCC 15356 / DSM 50701 / NCIMB 9529 / HD100).